The following is a 358-amino-acid chain: Trace amine-associated receptor 7b (358 aa).

The Extracellular segment spans residues Met1–Arg47. 2 N-linked (GlcNAc...) asparagine glycosylation sites follow: Asn5 and Asn34. 2 cysteine pairs are disulfide-bonded: Cys37-Cys201 and Cys120-Cys205. A helical transmembrane segment spans residues Leu48–Val68. Over Met69–Asn83 the chain is Cytoplasmic. A helical membrane pass occupies residues Phe84–Ser104. Topologically, residues Thr105 to Lys121 are extracellular. A helical membrane pass occupies residues Leu122–Val143. At Asp144–Lys166 the chain is on the cytoplasmic side. The helical transmembrane segment at Cys167–Ala187 threads the bilayer. At Asn188–Ser212 the chain is on the extracellular side. An N-linked (GlcNAc...) asparagine glycan is attached at Asn210. A helical transmembrane segment spans residues Trp213–Ser233. The Cytoplasmic portion of the chain corresponds to Lys234–Thr274. The chain crosses the membrane as a helical span at residues Leu275–Ile295. At Asp296 to Glu309 the chain is on the extracellular side. The helical transmembrane segment at Ile310–Phe333 threads the bilayer. Residues Arg334–Glu358 lie on the Cytoplasmic side of the membrane.

Belongs to the G-protein coupled receptor 1 family. In terms of tissue distribution, specifically expressed in neurons of the olfactory epithelium.

It is found in the cell membrane. Functionally, olfactory receptor specific for N,N-dimethylalkylamines trace amines, such as N,N-dimethylcyclohexylamine. Trace amine compounds are enriched in animal body fluids and act on trace amine-associated receptors (TAARs) to elicit both intraspecific and interspecific innate behaviors. Ligand-binding causes a conformation change that triggers signaling via G(s)-class of G alpha proteins (GNAL or GNAS). The chain is Trace amine-associated receptor 7b from Mus musculus (Mouse).